The following is a 1030-amino-acid chain: Leucine-rich repeat and coiled-coil domain-containing protein 1 (1030 aa).

LRR repeat units follow at residues 7–28, 29–50, 51–72, 73–94, 95–116, and 121–142; these read RNRELSLMDKQISSLLEICLNS, NLYSINLHCNQISKIEGLRHLC, YLQHLDLSSNLITKIEGLDSLA, SLQSLNLSCNKLTRVEGLEKLF, NLKKLNLSYNSIQDLTGLIPLH, and KLSHLYLHSNCINSIDEVLQST. The region spanning 160 to 200 is the LRRCT domain; that stretch reads NPVCHALGYREIILENLPQLNSLDGLDRSGDPVTAHEVDSM. The segment at 298-401 is disordered; the sequence is KSEQTKLKAK…GQILGKPHAI (104 aa). Positions 300–311 are enriched in basic and acidic residues; it reads EQTKLKAKRDTD. Composition is skewed to polar residues over residues 338–368 and 378–393; these read KTSQTSKQQANQQLKGRTSYSELKQNVSRKQ and ETSLSSGRTDTDSTGQ. A coiled-coil region spans residues 432 to 645; it reads RERRWKAEQV…DLEDEFRAAL (214 aa).

Belongs to the LRRCC1 family.

It localises to the cytoplasm. It is found in the cytoskeleton. The protein resides in the microtubule organizing center. Its subcellular location is the centrosome. The protein localises to the centriole. Functionally, required for the organization of the mitotic spindle. Maintains the structural integrity of centrosomes during mitosis. This chain is Leucine-rich repeat and coiled-coil domain-containing protein 1 (lrrcc1), found in Xenopus laevis (African clawed frog).